The sequence spans 229 residues: MAEEMESSLEASFSSSGAVSGASGFLPPARSRIFKIIVIGDSNVGKTCLTYRFCAGRFPDRTEATIGVDFRERAVEIDGERIKIQLWDTAGQERFRKSMVQHYYRNVHAVVFVYDMTNMASFHSLPSWIEECKQHLLANDIPRILVGNKCDLRSAIQVPTDLAQKFADTHSMPLFETSAKNPNDNDHVEAIFMTLAHKLKSHKPLMLSQPPDNGIILKPEPKPAMTCWC.

GTP is bound by residues asparagine 43, valine 44, glycine 45, lysine 46, threonine 47, cysteine 48, threonine 62, and threonine 65. Threonine 47 is a Mg(2+) binding site. The Switch 1 signature appears at 56–68 (GRFPDRTEATIGV). Threonine 65 and aspartate 88 together coordinate Mg(2+). A Switch 2 motif is present at residues 89-108 (TAGQERFRKSMVQHYYRNVH). Glycine 91, asparagine 148, lysine 149, aspartate 151, alanine 179, and lysine 180 together coordinate GTP. Residues cysteine 227 and cysteine 229 are each lipidated (S-geranylgeranyl cysteine). Cysteine 229 is modified (cysteine methyl ester).

Belongs to the small GTPase superfamily. Rab family. As to quaternary structure, interacts (GTP- and GDP-bound forms) with ATG16L1; the complex consists of a tetramer where two RAB33B molecules bind independently one molecule of the ATG16L1 homodimer; the interaction promotes ATG12-ATG5-ATG16L1 complex recruitment to phagophores. Interacts with ATG16L2; however interaction is approximately hundred times lower than for ATG16L1. Interacts with RIC1 (via C-terminus domain); the interaction is direct with a preference for RAB33B-GTP. Interacts with RGP1. Mg(2+) serves as cofactor. Post-translationally, prenylated.

It is found in the golgi apparatus membrane. Its subcellular location is the golgi apparatus. It localises to the cis-Golgi network. The protein resides in the preautophagosomal structure membrane. It carries out the reaction GTP + H2O = GDP + phosphate + H(+). With respect to regulation, regulated by guanine nucleotide exchange factors (GEFs) which promote the exchange of bound GDP for free GTP. Regulated by GTPase activating proteins (GAPs) such as SGSM2 which increase the GTP hydrolysis activity. Inhibited by GDP dissociation inhibitors (GDIs). Functionally, the small GTPases Rab are key regulators of intracellular membrane trafficking, from the formation of transport vesicles to their fusion with membranes. Rabs cycle between an inactive GDP-bound form and an active GTP-bound form that is able to recruit to membranes different sets of downstream effectors directly responsible for vesicle formation, movement, tethering and fusion. RAB33B acts, in coordination with RAB6A, to regulate intra-Golgi retrograde trafficking. Participates in autophagosome formation by recruiting the ATG12-ATG5-ATG16L1 complex to phagophores, probably in a nucleotide-independent manner. The chain is Ras-related protein Rab-33B from Homo sapiens (Human).